A 443-amino-acid polypeptide reads, in one-letter code: ATP-dependent protease ATPase subunit HslU (443 aa).

Residues isoleucine 20, 62-67 (GVGKTE), aspartate 255, glutamate 321, and arginine 393 each bind ATP.

Belongs to the ClpX chaperone family. HslU subfamily. In terms of assembly, a double ring-shaped homohexamer of HslV is capped on each side by a ring-shaped HslU homohexamer. The assembly of the HslU/HslV complex is dependent on binding of ATP.

Its subcellular location is the cytoplasm. Its function is as follows. ATPase subunit of a proteasome-like degradation complex; this subunit has chaperone activity. The binding of ATP and its subsequent hydrolysis by HslU are essential for unfolding of protein substrates subsequently hydrolyzed by HslV. HslU recognizes the N-terminal part of its protein substrates and unfolds these before they are guided to HslV for hydrolysis. This is ATP-dependent protease ATPase subunit HslU from Helicobacter pylori (strain HPAG1).